Reading from the N-terminus, the 382-residue chain is 4-hydroxy-3-methylbut-2-en-1-yl diphosphate synthase (flavodoxin) (382 aa).

The [4Fe-4S] cluster site is built by C290, C293, C327, and E334.

This sequence belongs to the IspG family. The cofactor is [4Fe-4S] cluster.

The catalysed reaction is (2E)-4-hydroxy-3-methylbut-2-enyl diphosphate + oxidized [flavodoxin] + H2O + 2 H(+) = 2-C-methyl-D-erythritol 2,4-cyclic diphosphate + reduced [flavodoxin]. Its pathway is isoprenoid biosynthesis; isopentenyl diphosphate biosynthesis via DXP pathway; isopentenyl diphosphate from 1-deoxy-D-xylulose 5-phosphate: step 5/6. Converts 2C-methyl-D-erythritol 2,4-cyclodiphosphate (ME-2,4cPP) into 1-hydroxy-2-methyl-2-(E)-butenyl 4-diphosphate. This Rhodopirellula baltica (strain DSM 10527 / NCIMB 13988 / SH1) protein is 4-hydroxy-3-methylbut-2-en-1-yl diphosphate synthase (flavodoxin).